The sequence spans 353 residues: S-adenosylmethionine:tRNA ribosyltransferase-isomerase (353 aa).

This sequence belongs to the QueA family. In terms of assembly, monomer.

The protein resides in the cytoplasm. It catalyses the reaction 7-aminomethyl-7-carbaguanosine(34) in tRNA + S-adenosyl-L-methionine = epoxyqueuosine(34) in tRNA + adenine + L-methionine + 2 H(+). Its pathway is tRNA modification; tRNA-queuosine biosynthesis. Transfers and isomerizes the ribose moiety from AdoMet to the 7-aminomethyl group of 7-deazaguanine (preQ1-tRNA) to give epoxyqueuosine (oQ-tRNA). This chain is S-adenosylmethionine:tRNA ribosyltransferase-isomerase, found in Rickettsia bellii (strain OSU 85-389).